Here is a 173-residue protein sequence, read N- to C-terminus: Lipoprotein signal peptidase (173 aa).

3 helical membrane passes run 9 to 29, 37 to 57, and 70 to 90; these read LPFL…ILVV, VIPV…GAAF, and ILLV…YLKS. Active-site residues include Asp124 and Asp146. The chain crosses the membrane as a helical span at residues 142–162; the sequence is FNAADSFIVCCGIGLGVNLIL.

This sequence belongs to the peptidase A8 family.

Its subcellular location is the cell inner membrane. The enzyme catalyses Release of signal peptides from bacterial membrane prolipoproteins. Hydrolyzes -Xaa-Yaa-Zaa-|-(S,diacylglyceryl)Cys-, in which Xaa is hydrophobic (preferably Leu), and Yaa (Ala or Ser) and Zaa (Gly or Ala) have small, neutral side chains.. Its pathway is protein modification; lipoprotein biosynthesis (signal peptide cleavage). This protein specifically catalyzes the removal of signal peptides from prolipoproteins. The protein is Lipoprotein signal peptidase of Treponema denticola (strain ATCC 35405 / DSM 14222 / CIP 103919 / JCM 8153 / KCTC 15104).